The following is a 432-amino-acid chain: Adenylosuccinate synthetase (432 aa).

GTP contacts are provided by residues Gly12–Lys18 and Gly40–Thr42. The active-site Proton acceptor is Asp13. The Mg(2+) site is built by Asp13 and Gly40. Residues Asp13–Lys16, Asn38–His41, Thr130, Arg144, Gln225, Thr240, and Arg304 contribute to the IMP site. His41 (proton donor) is an active-site residue. Ala300–Arg306 lines the substrate pocket. GTP contacts are provided by residues Arg306, Lys332–Asp334, and Ser414–Gly416.

It belongs to the adenylosuccinate synthetase family. In terms of assembly, homodimer. Requires Mg(2+) as cofactor.

It localises to the cytoplasm. It carries out the reaction IMP + L-aspartate + GTP = N(6)-(1,2-dicarboxyethyl)-AMP + GDP + phosphate + 2 H(+). Its pathway is purine metabolism; AMP biosynthesis via de novo pathway; AMP from IMP: step 1/2. Functionally, plays an important role in the de novo pathway of purine nucleotide biosynthesis. Catalyzes the first committed step in the biosynthesis of AMP from IMP. In Anaeromyxobacter dehalogenans (strain 2CP-1 / ATCC BAA-258), this protein is Adenylosuccinate synthetase.